The primary structure comprises 279 residues: uncharacterized protein (279 aa).

This is an uncharacterized protein from Bacillus subtilis (strain 168).